The sequence spans 2377 residues: Serine/threonine-protein kinase WNK1 (2377 aa).

Disordered regions lie at residues 1–79 (MSDG…RFFR) and 93–203 (LPGL…QQDD). A phosphothreonine mark is found at Thr-17 and Thr-58. The segment covering 48–64 (RTEEYRRRRHTMDKDSR) has biased composition (basic and acidic residues). Composition is skewed to low complexity over residues 101-111 (PQPSVPAVVPQ) and 127-141 (VASQVSQQPSAAASP). A compositionally biased stretch (polar residues) spans 149–158 (SATTTVPSST). A phosphoserine mark is found at Ser-165 and Ser-172. One can recognise a Protein kinase domain in the interval 221–479 (LKFDIEIGRG…IKDLLNHAFF (259 aa)). Residue Ser-231 coordinates ATP. Chloride is bound by residues Phe-283 and Leu-299. Residues 301–304 (TELM) and Lys-351 contribute to the ATP site. Residue Asp-368 is the Proton acceptor of the active site. Chloride-binding residues include Leu-369 and Leu-371. A phosphoserine; by autocatalysis mark is found at Ser-378 and Ser-382. The interval 488–555 (ELAEEDDGEK…VCEGDHKTMA (68 aa)) is autoinhibitory domain. Basic and acidic residues predominate over residues 573–588 (QLVREEQEKRKQEESS). 2 disordered regions span residues 573-782 (QLVR…SAGT) and 1013-1114 (PAVS…SRPK). Composition is skewed to polar residues over residues 593–628 (NEQQASVSQAGIQQLSAASTGIPTAPATSASVSTQV), 638–705 (HQQL…QSQP), and 713–733 (SMAQGQNQGQPSSSLAGVLSS). The tract at residues 629 to 639 (EPEEPEADQHQ) is interaction with KLHL3. Residues 734–746 (QPIQHPQQQGIQP) are compositionally biased toward low complexity. Positions 747–782 (TVPSQQAVQYSLPQAASSSEGTTAQPVSQPQVSAGT) are enriched in polar residues. The span at 1018-1028 (TQQPPTTSSQQ) shows a compositional bias: low complexity. Polar residues predominate over residues 1029 to 1038 (AVLESTQGVS). The span at 1042–1058 (PPEQTPITQSQPTQPVP) shows a compositional bias: low complexity. Positions 1075–1085 (SDGNENAPSSS) are enriched in polar residues. The segment covering 1093–1114 (TKRHYRKSVRSRSRHEKTSRPK) has biased composition (basic residues). Residues 1252 to 1255 (RFIV) carry the RFXV motif 1 motif. Residue Ser-1256 is modified to Phosphoserine. Disordered regions lie at residues 1726–1760 (GQVSTPGTHASAPVGTATGVKPGTTPPKPTKTVVP) and 1818–1847 (TMSSTTVTEAGTRLQKDGTEGHVTATSSGA). Low complexity predominate over residues 1738–1748 (PVGTATGVKPG). The residue at position 1843 (Thr-1843) is a Phosphothreonine. Residues 1854–1857 (RFQV) carry the RFXV motif 2 motif. Positions 1860-1945 (TMDDAQKERK…TKVGRFQVTT (86 aa)) are disordered. Positions 1863–1879 (DAQKERKNRSEDTKSVH) are enriched in basic and acidic residues. Residues 1882–1900 (SSTSESSVLSSSSPESTLV) are compositionally biased toward low complexity. Short sequence motifs (RFXV motif) lie at residues 1940–1943 (RFQV) and 1952–1955 (RFSV). Positions 1959-1969 (EDKVTELKKEG) are enriched in basic and acidic residues. 5 disordered regions span residues 1959 to 1984 (EDKVTELKKEGPVTSPPFRDSEQTVI), 1989 to 2008 (PKKEKPELAEPSHLNGPSSD), 2015 to 2064 (SRGT…DIED), 2107 to 2191 (VIIP…NLYS), and 2203 to 2239 (SLSAPGQGTSSTNTVGGTVSSQAAQAQPPAMTSSRKG). Ser-1973 is subject to Phosphoserine. Over residues 1989 to 1998 (PKKEKPELAE) the composition is skewed to basic and acidic residues. A phosphoserine mark is found at Ser-2006, Ser-2007, Ser-2022, Ser-2024, and Ser-2027. The segment covering 2035–2057 (SLPVQNLSQSLSNSFNSSYMSSD) has biased composition (low complexity). At Ser-2116 the chain carries Phosphoserine. The segment covering 2117–2129 (GRRRRPTKSKGSK) has biased composition (basic residues). The segment covering 2130–2140 (SSRSSSLGNKS) has biased composition (low complexity). Positions 2141–2191 (PQLSGNLSGQSGTSVLHPQQTLHPAGNTPETGHNQLLQPLKPSPSSDNLYS) are enriched in polar residues. Low complexity predominate over residues 2208-2232 (GQGTSSTNTVGGTVSSQAAQAQPPA). The segment at 2236 to 2256 (SRKGTFTDDLHKLVDNWARDA) is amphipathic alpha-helix. A phosphoserine mark is found at Ser-2265 and Ser-2281. The segment at 2325–2344 (PAPFGTQWSGTGGPAPQPLG) is disordered. Phosphoserine is present on residues Ser-2365 and Ser-2367.

This sequence belongs to the protein kinase superfamily. Ser/Thr protein kinase family. WNK subfamily. Interacts with WNK3. Interacts with WNK4; inhibiting the activity of WNK4. Interacts with SGK1; promoting its activation. Associates with the mTORC2 complex. Interacts with UVRAG. As to quaternary structure, interacts with isoform 1; inhibiting isoform 1 activity. Requires Mg(2+) as cofactor. Autophosphorylated at Ser-378 and Ser-382, promoting its activity. Autophosphorylation at Ser-382 is inhibited by intracellular calcium. Phosphorylation at Thr-58 increases ability to activate SGK1. Post-translationally, ubiquitinated by the BCR(KLHL3) complex, leading to its degradation. Also ubiquitinated by the BCR(KLHL2) complex. In terms of processing, may be O-glycosylated. As to expression, widely expressed in both adult and embryonic tissue, with highest levels observed in the testis and lower levels in heart, lung, kidney, placenta, brain and skeletal muscle. Expressed in pancreatic duct. Two isoforms are expressed in heart, a single shorter isoform in the kidney. Locates to the distal convoluted tubule, the medullary collecting duct and the cortical collecting duct of the kidney. Restricted to the nervous system, expressed preferentially in sensory neurons than in motor neurons and in general more abundant in axons than in cell bodies (at protein level). In the DRG, predominantly expressed in the satellite cells that envelop sensory neurons, but low expression also observed in the cell bodies of neurons (at protein level). In the sciatic nerve, expressed in the Schwann cells that surround axons and in a mosaic distribution of axons (at protein level). In the spinal cord, expressed in superficial layers (LI and LII), as well as in the fibers of the Lissauer tract (at protein level). Also detected in the axon fibers of dorsolateral funiculus and lateral funiculus (at protein level).

Its subcellular location is the cytoplasm. The protein localises to the nucleus. The protein resides in the cytoskeleton. It is found in the spindle. The catalysed reaction is L-seryl-[protein] + ATP = O-phospho-L-seryl-[protein] + ADP + H(+). It catalyses the reaction L-threonyl-[protein] + ATP = O-phospho-L-threonyl-[protein] + ADP + H(+). Its activity is regulated as follows. Activated in response to hyperosmotic stress: cell shrinkage promotes formation of a membraneless compartment that concentrates WNK1 with its substrates, OXSR1/OSR1 and STK39/SPAK. Activation requires autophosphorylation of Ser-382 and, to a lower extent, Ser-378. Autophosphorylation and subsequent activation is inhibited by increases in intracellular ionic strength: Cl(-) potently inhibits WNK1 kinase activity via direct binding. Also inhibited by K(+) ions. Its function is as follows. Serine/threonine-protein kinase component of the WNK1-SPAK/OSR1 kinase cascade, which acts as a key regulator of blood pressure and regulatory volume increase by promoting ion influx. WNK1 mediates regulatory volume increase in response to hyperosmotic stress by acting as a molecular crowding sensor, which senses cell shrinkage and mediates formation of a membraneless compartment by undergoing liquid-liquid phase separation. The membraneless compartment concentrates WNK1 with its substrates, OXSR1/OSR1 and STK39/SPAK, promoting WNK1-dependent phosphorylation and activation of downstream kinases OXSR1/OSR1 and STK39/SPAK. Following activation, OXSR1/OSR1 and STK39/SPAK catalyze phosphorylation of ion cotransporters SLC12A1/NKCC2, SLC12A2/NKCC1, SLC12A5/KCC2 and SLC12A6/KCC3, regulating their activity. Phosphorylation of Na-K-Cl cotransporters SLC12A2/NKCC1 and SLC12A2/NKCC1 promote their activation and ion influx; simultaneously, phosphorylation of K-Cl cotransporters SLC12A5/KCC2 and SLC12A6/KCC3 inhibit their activity, blocking ion efflux. Also acts as a regulator of angiogenesis in endothelial cells. Also acts independently of the WNK1-SPAK/OSR1 kinase cascade by catalyzing phosphorylation of other substrates, such as SYT2, PCF11 and NEDD4L. Mediates phosphorylation of SYT2, regulating SYT2 association with phospholipids and membrane-binding. Regulates mRNA export in the nucleus by mediating phosphorylation of PCF11, thereby decreasing the association between PCF11 and POLR2A/RNA polymerase II and promoting mRNA export to the cytoplasm. Acts as a negative regulator of autophagy. Required for the abscission step during mitosis, independently of the WNK1-SPAK/OSR1 kinase cascade. WNK1 may also play a role in actin cytoskeletal reorganization. Also acts as a scaffold protein independently of its protein kinase activity: negatively regulates cell membrane localization of various transporters and channels, such as SLC4A4, SLC26A6, SLC26A9, TRPV4 and CFTR. Involved in the regulation of epithelial Na(+) channel (ENaC) by promoting activation of SGK1 in a kinase-independent manner: probably acts as a scaffold protein that promotes the recruitment of SGK1 to the mTORC2 complex in response to chloride, leading to mTORC2-dependent phosphorylation and activation of SGK1. Acts as an assembly factor for the ER membrane protein complex independently of its protein kinase activity: associates with EMC2 in the cytoplasm via its amphipathic alpha-helix, and prevents EMC2 ubiquitination and subsequent degradation, thereby promoting EMC2 stabilization. Kinase-defective isoform specifically expressed in kidney, which acts as a dominant-negative regulator of the longer isoform 1. Does not directly inhibit WNK4 and has no direct effect on sodium and chloride ion transport. Down-regulates sodium-chloride cotransporter activity indirectly by inhibiting isoform 1, it associates with isoform 1 and attenuates its kinase activity. In kidney, may play an important role regulating sodium and potassium balance. The polypeptide is Serine/threonine-protein kinase WNK1 (Mus musculus (Mouse)).